Here is a 180-residue protein sequence, read N- to C-terminus: UPF0227 protein Shew_1627 (180 aa).

Belongs to the UPF0227 family.

This chain is UPF0227 protein Shew_1627, found in Shewanella loihica (strain ATCC BAA-1088 / PV-4).